The following is a 320-amino-acid chain: Cytochrome c biogenesis protein CcsA (320 aa).

The next 7 membrane-spanning stretches (helical) occupy residues 13–33, 46–66, 73–93, 147–167, 226–246, 259–274, and 289–309; these read ISFS…FLLV, GMIV…IYSG, LYES…VSYL, MVLG…LLVI, IISL…VWAN, ETWA…IYFH, and VASM…LLGI.

It belongs to the CcmF/CycK/Ccl1/NrfE/CcsA family. In terms of assembly, may interact with Ccs1.

The protein resides in the plastid. The protein localises to the chloroplast thylakoid membrane. Functionally, required during biogenesis of c-type cytochromes (cytochrome c6 and cytochrome f) at the step of heme attachment. The chain is Cytochrome c biogenesis protein CcsA from Gossypium barbadense (Sea Island cotton).